Reading from the N-terminus, the 134-residue chain is Fatty acid-binding protein, muscle (134 aa).

Residues R109 and 129–131 contribute to the (9Z)-octadecenoate site; that span reads RIY.

This sequence belongs to the calycin superfamily. Fatty-acid binding protein (FABP) family. Monomer. As to expression, adult flight muscle.

It is found in the cytoplasm. Binds fatty acids in a 1:1 molar ratio. The polypeptide is Fatty acid-binding protein, muscle (Schistocerca gregaria (Desert locust)).